The sequence spans 360 residues: DNA replication and repair protein RecF (360 aa).

30–37 (GANGSGKT) is an ATP binding site.

The protein belongs to the RecF family.

Its subcellular location is the cytoplasm. In terms of biological role, the RecF protein is involved in DNA metabolism; it is required for DNA replication and normal SOS inducibility. RecF binds preferentially to single-stranded, linear DNA. It also seems to bind ATP. The polypeptide is DNA replication and repair protein RecF (Acinetobacter baumannii (strain ATCC 17978 / DSM 105126 / CIP 53.77 / LMG 1025 / NCDC KC755 / 5377)).